The following is a 360-amino-acid chain: Dual-specificity RNA methyltransferase RlmN (360 aa).

Catalysis depends on E93, which acts as the Proton acceptor. The Radical SAM core domain occupies 99–326 (EEDRNTLCIS…VITRSSRGAD (228 aa)). C106 and C331 are joined by a disulfide. Residues C113, C117, and C120 each coordinate [4Fe-4S] cluster. S-adenosyl-L-methionine contacts are provided by residues 158–159 (GE), S190, 212–214 (SLN), and N288. The S-methylcysteine intermediate role is filled by C331.

The protein belongs to the radical SAM superfamily. RlmN family. [4Fe-4S] cluster serves as cofactor.

It is found in the cytoplasm. The enzyme catalyses adenosine(2503) in 23S rRNA + 2 reduced [2Fe-2S]-[ferredoxin] + 2 S-adenosyl-L-methionine = 2-methyladenosine(2503) in 23S rRNA + 5'-deoxyadenosine + L-methionine + 2 oxidized [2Fe-2S]-[ferredoxin] + S-adenosyl-L-homocysteine. It catalyses the reaction adenosine(37) in tRNA + 2 reduced [2Fe-2S]-[ferredoxin] + 2 S-adenosyl-L-methionine = 2-methyladenosine(37) in tRNA + 5'-deoxyadenosine + L-methionine + 2 oxidized [2Fe-2S]-[ferredoxin] + S-adenosyl-L-homocysteine. Its function is as follows. Specifically methylates position 2 of adenine 2503 in 23S rRNA and position 2 of adenine 37 in tRNAs. m2A2503 modification seems to play a crucial role in the proofreading step occurring at the peptidyl transferase center and thus would serve to optimize ribosomal fidelity. This chain is Dual-specificity RNA methyltransferase RlmN, found in Geobacter sulfurreducens (strain ATCC 51573 / DSM 12127 / PCA).